A 697-amino-acid chain; its full sequence is Polyribonucleotide nucleotidyltransferase (697 aa).

Mg(2+) is bound by residues D488 and D494. The region spanning 555-614 (PTFEVITINPDKIRDVIGKGGATIRQITEETKAAIDIEDNGTVRVFGETKAAAKAAIAKI) is the KH domain. Residues 624–692 (GKIYDGKVIR…NRGRIKLTMK (69 aa)) form the S1 motif domain.

Belongs to the polyribonucleotide nucleotidyltransferase family. Component of the RNA degradosome, which is a multiprotein complex involved in RNA processing and mRNA degradation. It depends on Mg(2+) as a cofactor.

It localises to the cytoplasm. The enzyme catalyses RNA(n+1) + phosphate = RNA(n) + a ribonucleoside 5'-diphosphate. Its function is as follows. Involved in mRNA degradation. Catalyzes the phosphorolysis of single-stranded polyribonucleotides processively in the 3'- to 5'-direction. In Acinetobacter baumannii (strain AB307-0294), this protein is Polyribonucleotide nucleotidyltransferase.